The primary structure comprises 227 residues: MSESLIAIVPAAGIGARASLPGEAAVPKQYRPLAGQPMLRHAVRALLADPRIVQVRVAVSAGDGWVEQALAGLPRTVWRPCGGPNRVDTVAAALADSGADADDWILVHDAARPGLPAAALARLIDACLDDAVGGLLALPVADTVKAGRQRVSRTVDRDGLWLAQTPQMFRAGLLRDALARARAAGLAVTDEASAVEAAGHAPRLVAGALRNFKVTWPDDFELMEKWL.

Belongs to the IspD/TarI cytidylyltransferase family. IspD subfamily.

The catalysed reaction is 2-C-methyl-D-erythritol 4-phosphate + CTP + H(+) = 4-CDP-2-C-methyl-D-erythritol + diphosphate. It participates in isoprenoid biosynthesis; isopentenyl diphosphate biosynthesis via DXP pathway; isopentenyl diphosphate from 1-deoxy-D-xylulose 5-phosphate: step 2/6. In terms of biological role, catalyzes the formation of 4-diphosphocytidyl-2-C-methyl-D-erythritol from CTP and 2-C-methyl-D-erythritol 4-phosphate (MEP). The protein is 2-C-methyl-D-erythritol 4-phosphate cytidylyltransferase of Bordetella parapertussis (strain 12822 / ATCC BAA-587 / NCTC 13253).